The chain runs to 524 residues: Germ cell-less protein-like 1 (524 aa).

The tract at residues 1 to 37 (MGALSSRVLRPAGRTEQPEPTPGAGGAARRSDAGEDA) is disordered. The Nuclear localization signal signature appears at 47-53 (GRKRKRS). The segment at 63 to 83 (DSETDDDEDEGDEQQRLLNTP) is disordered. Ser-64 bears the Phosphoserine mark. A compositionally biased stretch (acidic residues) spans 65-74 (ETDDDEDEGD). Phosphothreonine is present on Thr-66. The Nuclear localization signal motif lies at 83–89 (PRRKKLK). In terms of domain architecture, BTB spans 106-176 (SDIKICALGE…LYRDDVLIKP (71 aa)).

As to quaternary structure, interacts with TMPO-Beta, TSG101 and TFDP2. Interacts with EMD. In terms of tissue distribution, ubiquitously expressed at low levels throughout development and in adult tissues.

It is found in the nucleus matrix. Possible function in spermatogenesis. Enhances the degradation of MDM2 and increases the amount of p53 probably by modulating the nucleocytoplasmic transport. The sequence is that of Germ cell-less protein-like 1 (Gmcl1) from Mus musculus (Mouse).